Reading from the N-terminus, the 624-residue chain is MREQFSVLVISLLFSSSYGQVGQMGPPPGQSGQPWTLAEFDAIDTHLKNIQMYARSLQDIVYQERMKQYPFMPNSTAGQPNMGYSTFANDVINRLTKIEFETGELVTQYPLCPSGGTGGNPYPVIPPNAPPPQNVMIQSETIGNSSSVIVSWDRPNVVGTDVRLDDLQYKVYFAPLDEYGQQTAEAIVFSICSVNQTVASITDLYPRSFYKVSVGTVICSTSESSSGAKSLKTPDIIPSEPTNLRVDGTKPNAIALRWDLPLLMGTLANYTIYVTSENGTGFEVAVDPTQVNAILYDLIEGTRYVISVSAFSDNGESPKSSSIEVMTDVFVPDMPRFFQVIFVNTTSVHLVWEPPNPGAGMIRYYSINYTDSLYSQFFNFKTPNAKITTAIITGLQPATTYYFRAFAHTGRRAGAGSAVIMQDTDITVPTVPRELYAQKAKNDPPRARLQWLPPAKTYGSLKNYSIHWGVKNGATRKEEIEPGLLEWYSDFLDDNTEHEFKLYAQNEKGYGPAATVTHRTPKRDTVVPPNVKVDRKKGKNNETVLVVSWNPITQPGKQVSGFRILYRKFEWVYTGRWSLKEIPDPNARSATIGVENSNYSFIVVVRGYRNPRPNMQVNPPWPGR.

Residues Met-1–Gly-19 form the signal peptide. Fibronectin type-III domains follow at residues Pro-131–Ile-236, Glu-240–Phe-330, Met-334–Thr-430, Val-431–Asp-524, and Val-527–Arg-624.

Prismatic layer of shell (at protein level).

It is found in the secreted. The chain is Fibronectin type III domain-containing protein 2 from Margaritifera margaritifera (Freshwater pearl mussel).